Reading from the N-terminus, the 239-residue chain is Protein-S-isoprenylcysteine O-methyltransferase (239 aa).

The Cytoplasmic portion of the chain corresponds to 1-23; that stretch reads MHQDFQEDEHEYPDIRRNPLHEV. A helical transmembrane segment spans residues 24 to 44; the sequence is TMTSYILGILLGIFVGLFPQI. Residues 45–47 lie on the Lumenal side of the membrane; the sequence is RFK. The chain crosses the membrane as a helical span at residues 48-68; sequence NFNLFIIALSLFHFLEYYITA. At 69 to 88 the chain is on the cytoplasmic side; that stretch reads KYNPLKVHSESFLLNNGKSY. A helical transmembrane segment spans residues 89–109; the sequence is MAAHSFAILECLVESFLFPDL. Residue K110 is a topological domain, lumenal. The chain crosses the membrane as a helical span at residues 111-131; sequence IFSYSLATKLCTVLGCLLVIL. Over 132-175 the chain is Cytoplasmic; the sequence is GQYTRTIAMHTAGHSFSHIVKTKKESDHVLVKTGVYSWSRHPSY. S-adenosyl-L-methionine-binding positions include 159–162, Y167, and 172–175; these read HVLV and HPSY. The segment at residues 176-206 is an intramembrane region (helical); sequence LGFFWWAIGTQLLLLNPLSLVIFIFVLWKFF. At 207–239 the chain is on the cytoplasmic side; it reads SDRIRVEEKYLIEFFSAEYIEYKNKVGVGIPFI. R209 is a substrate binding site. Residue E213 coordinates S-adenosyl-L-methionine.

The protein belongs to the class VI-like SAM-binding methyltransferase superfamily. Isoprenylcysteine carboxyl methyltransferase family.

The protein resides in the endoplasmic reticulum membrane. The enzyme catalyses [protein]-C-terminal S-[(2E,6E)-farnesyl]-L-cysteine + S-adenosyl-L-methionine = [protein]-C-terminal S-[(2E,6E)-farnesyl]-L-cysteine methyl ester + S-adenosyl-L-homocysteine. Functionally, mediates C-terminal methylation of the isoprenylated C-terminal cysteine in A-factor mating pheromone and Ras proteins. Does not have a preference for the farnesyl or geranylgeranyl moieties in the model substrates N-acetyl-S-farnesyl-L-cysteine (AFC) and N-acetyl-S-geranylgeranyl-L-cysteine (AGGC) in vitro. In Saccharomyces cerevisiae (strain ATCC 204508 / S288c) (Baker's yeast), this protein is Protein-S-isoprenylcysteine O-methyltransferase (STE14).